Consider the following 532-residue polypeptide: Cilia- and flagella-associated protein 97 (532 aa).

Ser-19 bears the Phosphoserine mark. 5 disordered regions span residues 28 to 83, 116 to 263, 306 to 333, 398 to 421, and 485 to 532; these read ETNS…PVEN, IPNR…TPDI, KAAKKGKEKHEPDVSSKSSSVLDSSLDH, LSRQAEKPGSKSTIPRSADHPPKL, and GQYS…TAWL. Basic and acidic residues predominate over residues 35–49; sequence KQNDDPKERIDKDTK. The span at 50–63 shows a compositional bias: polar residues; sequence NVNSNTGMQTTENY. Basic and acidic residues predominate over residues 67 to 82; that stretch reads KGNERNVKFPPEHPVE. Residues 127 to 139 are compositionally biased toward acidic residues; it reads GEDDYYTDGEESS. Phosphothreonine is present on Thr-133. Residues Ser-138 and Ser-139 each carry the phosphoserine modification. Composition is skewed to low complexity over residues 170 to 185 and 194 to 205; these read SSSSSSSLSSSSSGSG and DSHLSDSSPSSK. Position 218 is a phosphoserine (Ser-218). Residues 227–239 show a composition bias toward polar residues; the sequence is IKSTETQPSSTTP. Phosphoserine is present on Ser-248. A compositionally biased stretch (polar residues) spans 253–263; that stretch reads TDVSPLSTPDI. Over residues 320 to 329 the composition is skewed to low complexity; that stretch reads SSKSSSVLDS. At Ser-330 the chain carries Phosphoserine. The stretch at 374 to 450 forms a coiled coil; sequence GKNYSFTREE…ALLKRLEAVK (77 aa). Over residues 493–503 the composition is skewed to polar residues; the sequence is SRTSSATSGLS.

This sequence belongs to the CFAP97 family.

The sequence is that of Cilia- and flagella-associated protein 97 from Homo sapiens (Human).